Consider the following 686-residue polypeptide: Band 4.1-like protein 4A (686 aa).

The FERM domain maps to 11–299 (FYCEVLLLDE…EHHTFFRMPE (289 aa)). Serine 304 bears the Phosphoserine mark. Residues 331–686 (RDLSIQLPRP…IQASRLKTET (356 aa)) form a disordered region. Residues 357–376 (AQTQPAESNSISRITANMEN) are compositionally biased toward polar residues. Phosphoserine occurs at positions 389, 393, and 402. The span at 418-428 (GPQSGLYNSPS) shows a compositional bias: polar residues. Residues 479–489 (RCNTSSGSESE) show a composition bias toward low complexity. 2 stretches are compositionally biased toward basic and acidic residues: residues 518-527 (VLRRQKEKNQ) and 547-561 (QAKEELWKHIQKELV). A compositionally biased stretch (basic residues) spans 588 to 601 (IRHSHSPRSYRQYR). Residues 648 to 658 (GSKDSLMEEKP) show a composition bias toward basic and acidic residues. Positions 673–686 (TIKTIQASRLKTET) are enriched in polar residues.

Expressed in many tissues. High levels of expression in brain, liver, thymus and peripheral blood leukocytes and low levels of expression in heart, kidney, testis and colon.

Its subcellular location is the cytoplasm. The protein localises to the cytoskeleton. The sequence is that of Band 4.1-like protein 4A from Homo sapiens (Human).